The following is a 215-amino-acid chain: ATP-dependent Clp protease proteolytic subunit 3 (215 aa).

Ser119 serves as the catalytic Nucleophile. His144 is an active-site residue.

This sequence belongs to the peptidase S14 family. Fourteen ClpP subunits assemble into 2 heptameric rings which stack back to back to give a disk-like structure with a central cavity, resembling the structure of eukaryotic proteasomes.

It localises to the cytoplasm. The catalysed reaction is Hydrolysis of proteins to small peptides in the presence of ATP and magnesium. alpha-casein is the usual test substrate. In the absence of ATP, only oligopeptides shorter than five residues are hydrolyzed (such as succinyl-Leu-Tyr-|-NHMec, and Leu-Tyr-Leu-|-Tyr-Trp, in which cleavage of the -Tyr-|-Leu- and -Tyr-|-Trp bonds also occurs).. Functionally, cleaves peptides in various proteins in a process that requires ATP hydrolysis. Has a chymotrypsin-like activity. Plays a major role in the degradation of misfolded proteins. In Prochlorococcus marinus subsp. pastoris (strain CCMP1986 / NIES-2087 / MED4), this protein is ATP-dependent Clp protease proteolytic subunit 3.